We begin with the raw amino-acid sequence, 3096 residues long: Unconventional myosin-XVB (3096 aa).

Disordered regions lie at residues 1–330 (MGRN…GPED), 389–489 (RPPE…GWGR), 508–540 (GGMPRASPGGRSPQVPTSPVPGDPFDQEDETPD), and 553–649 (AGRA…GPRL). Residues 19–33 (ASGEQESGSASADGA) show a composition bias toward low complexity. Residues 34-50 (PSRERRSDRGQADRAKP) show a composition bias toward basic and acidic residues. Positions 124-143 (RRRRKRKDKGPSARRGRRTP) are enriched in basic residues. Basic and acidic residues-rich tracts occupy residues 212-222 (DWPHADTRGRE) and 261-288 (TFEDSSRAPRDTGPAKDASDNRAQRGAE). Low complexity predominate over residues 307 to 330 (AVGQVPAAAGEGEAGAAAGAGPED). Basic and acidic residues predominate over residues 406 to 416 (WGRRKPDEGRG). Residues 417-426 (HGRGSKGRGR) are compositionally biased toward basic residues. Over residues 427–489 (GKADEGRGHE…HQRGYEGWGR (63 aa)) the composition is skewed to basic and acidic residues. Residues 720-1394 (EDMEDLARLR…GWQRLEELRD (675 aa)) enclose the Myosin motor domain. Position 818 to 825 (818 to 825 (GHSGSGKT)) interacts with ATP. Residues 1273-1295 (LEDLIARLGRSHVYFIQCLTPNP) are actin-binding. The IQ domain occupies 1414-1443 (RQRVLPRMQARMRGFQARKRYLRRRAALGQ). The region spanning 1551–1702 (RPGQPLAKPL…PTQLEWLAGW (152 aa)) is the MyTH4 1 domain. Disordered stretches follow at residues 1802 to 1833 (PGIQAPSLPPGPPPGPAPTLPSRDHTGEVQRS), 1963 to 2026 (MQQR…PKSF), and 2040 to 2262 (QITV…LPED). The span at 1808–1820 (SLPPGPPPGPAPT) shows a compositional bias: pro residues. Over residues 1963–1980 (MQQRQQQARASEAASQAS) the composition is skewed to low complexity. Acidic residues predominate over residues 2059–2076 (AQEEEEEEEEEEEQEEQE). Basic and acidic residues predominate over residues 2102–2116 (APKEAEAEPAKETAA). The span at 2159–2170 (GPVPVPVQPSRP) shows a compositional bias: pro residues. Residues 2176–2185 (RKIDPKDEAL) are compositionally biased toward basic and acidic residues. Pro residues-rich tracts occupy residues 2199–2217 (MLSPSPGKGPPPAVAPRPK) and 2247–2261 (HTPPPPPAPPLPLPE). The 62-residue stretch at 2481–2542 (KDSGYVIALR…PADIVQPAAA (62 aa)) folds into the SH3 domain. A disordered region spans residues 2548–2567 (SKEQRSGWHKGQLSNGEPGL). Positions 2643 to 2789 (YTKAPIQESL…PPPGEMKAFL (147 aa)) constitute a MyTH4 2 domain. The FERM domain occupies 2795–3096 (RLLLIHLPGG…ASCTEWPSIN (302 aa)).

It belongs to the TRAFAC class myosin-kinesin ATPase superfamily. Myosin family. Detected in brain, stomach and kidney.

The protein resides in the cytoplasm. The sequence is that of Unconventional myosin-XVB from Homo sapiens (Human).